Reading from the N-terminus, the 699-residue chain is Long-chain-fatty-acid--CoA ligase 1 (699 aa).

Met-1 is subject to N-acetylmethionine. Tyr-9 bears the 3'-nitrotyrosine mark. Residues Leu-25 to Ala-45 traverse the membrane as a helical; Signal-anchor for type III membrane protein segment. Topologically, residues Thr-46 to Ile-699 are cytoplasmic. Tyr-85 bears the Phosphotyrosine mark. A 3'-nitrotyrosine modification is found at Tyr-86. A glycan (O-linked (GlcNAc) serine) is linked at Ser-136. N6-acetyllysine occurs at positions 208, 357, and 387. Residue Ser-621 is modified to Phosphoserine. Residue Lys-633 is modified to N6-acetyllysine.

This sequence belongs to the ATP-dependent AMP-binding enzyme family. The cofactor is Mg(2+). Liver, heart, epididymal adipose and to a lesser extent brain, small intestine and lung.

The protein localises to the mitochondrion outer membrane. The protein resides in the peroxisome membrane. It localises to the microsome membrane. Its subcellular location is the endoplasmic reticulum membrane. It catalyses the reaction a long-chain fatty acid + ATP + CoA = a long-chain fatty acyl-CoA + AMP + diphosphate. The enzyme catalyses (5Z,8Z,11Z,14Z)-eicosatetraenoate + ATP + CoA = (5Z,8Z,11Z,14Z)-eicosatetraenoyl-CoA + AMP + diphosphate. It carries out the reaction 3,7,11,15-tetramethylhexadecanoate + ATP + CoA = phytanoyl-CoA + AMP + diphosphate. The catalysed reaction is hexadecanoate + ATP + CoA = hexadecanoyl-CoA + AMP + diphosphate. It catalyses the reaction (E)-hexadec-2-enoate + ATP + CoA = (2E)-hexadecenoyl-CoA + AMP + diphosphate. The enzyme catalyses 2,6,10,14-tetramethylpentadecanoate + ATP + CoA = pristanoyl-CoA + AMP + diphosphate. It carries out the reaction 14,15-epoxy-(5Z,8Z,11Z)-eicosatrienoate + ATP + CoA = 14,15-epoxy-(5Z,8Z,11Z)-eicosatrienoyl-CoA + AMP + diphosphate. The catalysed reaction is 5-hydroxy-(6E,8Z,11Z,14Z)-eicosatetraenoate + ATP + CoA = 5-hydroxy-(6E,8Z,11Z,14Z)-eicosatetraenoyl-CoA + AMP + diphosphate. It catalyses the reaction 12-hydroxy-(5Z,8Z,10E,14Z)-eicosatetraenoate + ATP + CoA = 12-hydroxy-(5Z,8Z,10E,14Z)-eicosatetraenoyl-CoA + AMP + diphosphate. The enzyme catalyses 15-hydroxy-(5Z,8Z,11Z,13E)-eicosatetraenoate + ATP + CoA = 15-hydroxy-(5Z,8Z,11Z,13E)-eicosatetraenoyl-CoA + AMP + diphosphate. It carries out the reaction (9Z)-octadecenoate + ATP + CoA = (9Z)-octadecenoyl-CoA + AMP + diphosphate. Its activity is regulated as follows. Inhibited at high temperature and by arachidonate. Functionally, catalyzes the conversion of long-chain fatty acids to their active form acyl-CoAs for both synthesis of cellular lipids, and degradation via beta-oxidation. Preferentially uses palmitoleate, oleate and linoleate. Preferentially activates arachidonate than epoxyeicosatrienoic acids (EETs) or hydroxyeicosatrienoic acids (HETEs). The chain is Long-chain-fatty-acid--CoA ligase 1 from Rattus norvegicus (Rat).